The sequence spans 615 residues: DNA mismatch repair protein MutL (615 aa).

The segment at 363-397 is disordered; sequence FAEPAAREPVAPRYTPAPASGSRPAAPWPNAQPGY. The span at 364–391 shows a compositional bias: low complexity; the sequence is AEPAAREPVAPRYTPAPASGSRPAAPWP.

The protein belongs to the DNA mismatch repair MutL/HexB family.

Functionally, this protein is involved in the repair of mismatches in DNA. It is required for dam-dependent methyl-directed DNA mismatch repair. May act as a 'molecular matchmaker', a protein that promotes the formation of a stable complex between two or more DNA-binding proteins in an ATP-dependent manner without itself being part of a final effector complex. This is DNA mismatch repair protein MutL from Shigella boydii serotype 18 (strain CDC 3083-94 / BS512).